The following is a 338-amino-acid chain: Thiosulfate-binding protein (338 aa).

The N-terminal stretch at 1–25 (MAVNLLKKNSLALVASLLLAGHVQA) is a signal peptide.

The protein belongs to the prokaryotic sulfate-binding protein family. As to quaternary structure, the complex is composed of two ATP-binding proteins (CysA), two transmembrane proteins (CysT and CysW) and a solute-binding protein (CysP).

It is found in the periplasm. Functionally, part of the ABC transporter complex CysAWTP (TC 3.A.1.6.1) involved in sulfate/thiosulfate import. This protein specifically binds thiosulfate and is involved in its transmembrane transport. This Escherichia coli (strain K12) protein is Thiosulfate-binding protein (cysP).